The primary structure comprises 198 residues: Autophagy-related protein 16 (198 aa).

Positions 24–177 form a coiled coil; that stretch reads ELVQTCSQMA…NKELVDRWMK (154 aa).

Belongs to the ATG16 family. Homodimer. Part of the ATG5-ATG12/ATG16 complex. Several units of each may be present in this complex. Interacts directly with ATG12.

The protein localises to the preautophagosomal structure membrane. In terms of biological role, stabilizes the ATG5-ATG12 conjugate. The ATG5-ATG12/ATG16 complex is required for efficient promotion of ATG8-conjugation to phosphatidylethanolamine and ATG8 localization to the pre-autophagosomal structure (PAS). Also recruits ATG3 to the PAS. Involved in endoplasmic reticulum-specific autophagic process and is essential for the survival of cells subjected to severe ER stress. Autophagy is required for proper vegetative growth, asexual/sexual reproduction, and full virulence. Autophagy is particularly involved in the biosynthesis of deoxynivalenol (DON), an important virulence determinant. The protein is Autophagy-related protein 16 of Gibberella zeae (strain ATCC MYA-4620 / CBS 123657 / FGSC 9075 / NRRL 31084 / PH-1) (Wheat head blight fungus).